A 451-amino-acid chain; its full sequence is uncharacterized protein (451 aa).

Residues 29–204 (LERYPDIIVF…TSMTFKAVPI (176 aa)) enclose the FAD-binding PCMH-type domain. Position 66 is a pros-8alpha-FAD histidine (His66).

It belongs to the oxygen-dependent FAD-linked oxidoreductase family. It depends on FAD as a cofactor.

This is an uncharacterized protein from Bacillus subtilis (strain 168).